The primary structure comprises 487 residues: Cytochrome P450 720B2 (487 aa).

A helical membrane pass occupies residues 14-34 (WLVGLLCLVLGFLLLQLYKLV). Cys436 is a binding site for heme.

The protein belongs to the cytochrome P450 family. Heme serves as cofactor.

The protein resides in the membrane. This is Cytochrome P450 720B2 (CYP720B2) from Pinus taeda (Loblolly pine).